The sequence spans 337 residues: Fructose-1,6-bisphosphatase class 1 (337 aa).

Mg(2+)-binding residues include E90, D112, L114, and D115. Residues D115–S118, N211, and K277 each bind substrate. E283 serves as a coordination point for Mg(2+).

This sequence belongs to the FBPase class 1 family. In terms of assembly, homotetramer. Requires Mg(2+) as cofactor.

It localises to the cytoplasm. It catalyses the reaction beta-D-fructose 1,6-bisphosphate + H2O = beta-D-fructose 6-phosphate + phosphate. The protein operates within carbohydrate biosynthesis; gluconeogenesis. In Azotobacter vinelandii (strain DJ / ATCC BAA-1303), this protein is Fructose-1,6-bisphosphatase class 1.